A 274-amino-acid chain; its full sequence is NH(3)-dependent NAD(+) synthetase (274 aa).

46–53 (GISGGQDS) serves as a coordination point for ATP. D52 lines the Mg(2+) pocket. R140 is a binding site for deamido-NAD(+). T160 is an ATP binding site. A Mg(2+)-binding site is contributed by E165. Deamido-NAD(+) contacts are provided by K173 and D180. Residues K189 and T211 each contribute to the ATP site. 260–261 (HK) contacts deamido-NAD(+).

This sequence belongs to the NAD synthetase family. Homodimer.

It carries out the reaction deamido-NAD(+) + NH4(+) + ATP = AMP + diphosphate + NAD(+) + H(+). It participates in cofactor biosynthesis; NAD(+) biosynthesis; NAD(+) from deamido-NAD(+) (ammonia route): step 1/1. In terms of biological role, catalyzes the ATP-dependent amidation of deamido-NAD to form NAD. Uses ammonia as a nitrogen source. This Listeria monocytogenes serotype 4b (strain CLIP80459) protein is NH(3)-dependent NAD(+) synthetase.